We begin with the raw amino-acid sequence, 252 residues long: Iron-sulfur cluster co-chaperone protein HscB homolog (252 aa).

A mitochondrion-targeting transit peptide spans 1 to 59 (MKKTKTMVASISTLIRRTYPSTNQCNSLATIQSQTQLPRESLQHHSSAEGRLRFSGRVF). The J domain maps to 93 to 165 (DYFQIFGLEK…LSRAMYIMKL (73 aa)).

The protein belongs to the HscB family. As to quaternary structure, interacts with ISU1 and HSP70-9/HSCA1.

It localises to the mitochondrion. The protein resides in the cytoplasm. Its subcellular location is the cytosol. Its function is as follows. Co-chaperone required for the assembly of iron-sulfur [Fe-S] clusters in both mitochondria and cytosol. Required for the activity of iron-sulfur proteins such as aconitase and succinate dehydrogenase. Involved in iron homeostasis and may take part in the control of iron translocation from roots to shoots. This chain is Iron-sulfur cluster co-chaperone protein HscB homolog, found in Arabidopsis thaliana (Mouse-ear cress).